A 503-amino-acid polypeptide reads, in one-letter code: ATP synthase subunit alpha (503 aa).

170–177 (GDKQTGKT) serves as a coordination point for ATP.

The protein belongs to the ATPase alpha/beta chains family. As to quaternary structure, F-type ATPases have 2 components, CF(1) - the catalytic core - and CF(0) - the membrane proton channel. CF(1) has five subunits: alpha(3), beta(3), gamma(1), delta(1), epsilon(1). CF(0) has three main subunits: a(1), b(2) and c(9-12). The alpha and beta chains form an alternating ring which encloses part of the gamma chain. CF(1) is attached to CF(0) by a central stalk formed by the gamma and epsilon chains, while a peripheral stalk is formed by the delta and b chains.

It is found in the cell inner membrane. The catalysed reaction is ATP + H2O + 4 H(+)(in) = ADP + phosphate + 5 H(+)(out). Produces ATP from ADP in the presence of a proton gradient across the membrane. The alpha chain is a regulatory subunit. The polypeptide is ATP synthase subunit alpha (Helicobacter acinonychis (strain Sheeba)).